An 83-amino-acid chain; its full sequence is uncharacterized protein (83 aa).

The protein belongs to the BolA/IbaG family.

This is an uncharacterized protein from Acinetobacter guillouiae (Acinetobacter genomosp. 11).